The sequence spans 73 residues: Neuropeptide-like protein 29 (73 aa).

An N-terminal signal peptide occupies residues 1 to 22 (MISTSSILVLVVLLACFMAASA). Residues Tyr-29, Tyr-39, Tyr-47, Tyr-55, and Tyr-63 each carry the tyrosine amide modification. At Trp-71 the chain carries Tryptophan amide.

It belongs to the YARP (YGGW-amide related peptide) family. As to expression, weakly or not expressed in absence of infection. Upon infection by D.coniospora, it is expressed in hypoderm. Also expressed in perivulval cells when D.coniospora spores adhere to this region. Expressed in hypodermis upon physical injury.

The protein resides in the secreted. Functionally, antimicrobial peptides that have antibacterial activity against the Gram-negative bacteria S.marcescens. Has antifungal activity against D.coniospora. May play a role in response to physical injury and osmotic stress. Through the neuropeptide receptor nlp-29, induces sleep upon activation of the innate immune response to molting and injury to the adult epidermis. In Caenorhabditis elegans, this protein is Neuropeptide-like protein 29.